The sequence spans 430 residues: Enolase (430 aa).

Residue Gln163 participates in (2R)-2-phosphoglycerate binding. Glu205 acts as the Proton donor in catalysis. The Mg(2+) site is built by Asp242, Glu287, and Asp314. (2R)-2-phosphoglycerate-binding residues include Lys339, Arg368, Ser369, and Lys390. Residue Lys339 is the Proton acceptor of the active site.

The protein belongs to the enolase family. Mg(2+) is required as a cofactor.

The protein resides in the cytoplasm. It localises to the secreted. Its subcellular location is the cell surface. The catalysed reaction is (2R)-2-phosphoglycerate = phosphoenolpyruvate + H2O. The protein operates within carbohydrate degradation; glycolysis; pyruvate from D-glyceraldehyde 3-phosphate: step 4/5. Its function is as follows. Catalyzes the reversible conversion of 2-phosphoglycerate (2-PG) into phosphoenolpyruvate (PEP). It is essential for the degradation of carbohydrates via glycolysis. The polypeptide is Enolase (Clostridioides difficile (strain 630) (Peptoclostridium difficile)).